Here is a 127-residue protein sequence, read N- to C-terminus: Probable toxin y4kH (127 aa).

It belongs to the MbcT/ParT/Res family.

Its function is as follows. Probable toxic component of a type II toxin-antitoxin (TA) system. It is not known which gene encodes its antitoxin. In Sinorhizobium fredii (strain NBRC 101917 / NGR234), this protein is Probable toxin y4kH.